The following is a 446-amino-acid chain: Glutamate--tRNA ligase (446 aa).

A 'HIGH' region motif is present at residues 9-19; sequence PSPTGLLHVGN. The 'KMSKS' region motif lies at 240 to 244; sequence GLSKR. Lys243 serves as a coordination point for ATP.

Belongs to the class-I aminoacyl-tRNA synthetase family. Glutamate--tRNA ligase type 1 subfamily. As to quaternary structure, monomer.

Its subcellular location is the cytoplasm. It carries out the reaction tRNA(Glu) + L-glutamate + ATP = L-glutamyl-tRNA(Glu) + AMP + diphosphate. Functionally, catalyzes the attachment of glutamate to tRNA(Glu) in a two-step reaction: glutamate is first activated by ATP to form Glu-AMP and then transferred to the acceptor end of tRNA(Glu). The chain is Glutamate--tRNA ligase from Azospirillum brasilense.